The chain runs to 145 residues: Hydrophobin-like protein 1 (145 aa).

The N-terminal stretch at 1–20 (MYLLQISISLLLLISTAATA) is a signal peptide. An N-linked (GlcNAc...) asparagine glycan is attached at N36. 4 disulfide bridges follow: C61–C121, C71–C113, C72–C104, and C122–C139.

It is found in the secreted. It localises to the cell wall. Its function is as follows. Aerial growth, conidiation, and dispersal of filamentous fungi in the environment rely upon a capability of their secreting small amphipathic proteins called hydrophobins (HPBs) with low sequence identity. Class I can self-assemble into an outermost layer of rodlet bundles on aerial cell surfaces, conferring cellular hydrophobicity that supports fungal growth, development and dispersal; whereas Class II form highly ordered films at water-air interfaces through intermolecular interactions but contribute nothing to the rodlet structure. In Botryotinia fuckeliana, hydrophobins are not involved in conferring surface hydrophobicity to conidia and aerial hyphae and their function in sclerotia and fruiting bodies remains to be investigated. The polypeptide is Hydrophobin-like protein 1 (Botryotinia fuckeliana (strain B05.10) (Noble rot fungus)).